Here is a 356-residue protein sequence, read N- to C-terminus: Holliday junction branch migration complex subunit RuvB (356 aa).

Positions Ser13–Tyr201 are large ATPase domain (RuvB-L). A disordered region spans residues Asn15–Arg35. Residues Leu40, Arg41, Gly82, Lys85, Thr86, Thr87, Glu148–Phe150, Arg191, Tyr201, and Arg238 each bind ATP. Residue Thr86 participates in Mg(2+) binding. The segment at Ser202–Gln273 is small ATPAse domain (RuvB-S). Residues Glu276–Lys356 are head domain (RuvB-H). DNA contacts are provided by Arg331 and Arg336.

Belongs to the RuvB family. In terms of assembly, homohexamer. Forms an RuvA(8)-RuvB(12)-Holliday junction (HJ) complex. HJ DNA is sandwiched between 2 RuvA tetramers; dsDNA enters through RuvA and exits via RuvB. An RuvB hexamer assembles on each DNA strand where it exits the tetramer. Each RuvB hexamer is contacted by two RuvA subunits (via domain III) on 2 adjacent RuvB subunits; this complex drives branch migration. In the full resolvosome a probable DNA-RuvA(4)-RuvB(12)-RuvC(2) complex forms which resolves the HJ.

It localises to the cytoplasm. It catalyses the reaction ATP + H2O = ADP + phosphate + H(+). Functionally, the RuvA-RuvB-RuvC complex processes Holliday junction (HJ) DNA during genetic recombination and DNA repair, while the RuvA-RuvB complex plays an important role in the rescue of blocked DNA replication forks via replication fork reversal (RFR). RuvA specifically binds to HJ cruciform DNA, conferring on it an open structure. The RuvB hexamer acts as an ATP-dependent pump, pulling dsDNA into and through the RuvAB complex. RuvB forms 2 homohexamers on either side of HJ DNA bound by 1 or 2 RuvA tetramers; 4 subunits per hexamer contact DNA at a time. Coordinated motions by a converter formed by DNA-disengaged RuvB subunits stimulates ATP hydrolysis and nucleotide exchange. Immobilization of the converter enables RuvB to convert the ATP-contained energy into a lever motion, pulling 2 nucleotides of DNA out of the RuvA tetramer per ATP hydrolyzed, thus driving DNA branch migration. The RuvB motors rotate together with the DNA substrate, which together with the progressing nucleotide cycle form the mechanistic basis for DNA recombination by continuous HJ branch migration. Branch migration allows RuvC to scan DNA until it finds its consensus sequence, where it cleaves and resolves cruciform DNA. The polypeptide is Holliday junction branch migration complex subunit RuvB (Prochlorococcus marinus (strain SARG / CCMP1375 / SS120)).